Here is a 219-residue protein sequence, read N- to C-terminus: MSKHLAITKFRPANWLQKAGYAPQVFLFRNLESGQVLYSQFPTFSWKQIDTNFQRPNWENKKPSTRRDIWKCMAVVDLPDYDKSVKVYQNLCRLRYLRDVTFSKQAKDMRKKNESGHTWYSSQYRPTYSQEAVADLRECLLKLKDVQSSIKVHWEDEWRMGDKEKYWNPVLPELNHTTLERLGNVSREESAILKELGERAKEEFARVRQQESAAQNISL.

It belongs to the mitochondrion-specific ribosomal protein mL67 family.

It localises to the nucleus. The protein resides in the mitochondrion. Its function is as follows. Transcription factor involved in regulation of RNA polymerase II-dependent transcription. Also involved in regulation of mitochondrial DNA recombination, maintenance and repair, and generation of homoplasmic cells. The sequence is that of Large ribosomal subunit protein mL67 (MHR1) from Kluyveromyces lactis (strain ATCC 8585 / CBS 2359 / DSM 70799 / NBRC 1267 / NRRL Y-1140 / WM37) (Yeast).